The sequence spans 340 residues: MRLCITGGGTGGHLMIAEALVEACANDGHEAIFIGSTSGQDRKYFEQNSKFSHVYFLQTTGVVNQRGLGKLKALWLVLRAFFASRAILKKHNIQATYSVGGFSAAAASFASLSRLIPLFIHEQNAVYGKLNSILKPFATRFISAYDEASPIKGYPVKDIFFKNARLRDEIKCVIFLGGSQGAKAINDLALSVALELEARGVKIIHQAGERDYERVKSAYEELGVKAELCGFTKEMPSLMARADLAVSRSGASTLWELCANALPSFFIPFPHAASDHQYHNAKFIVDNELGWCQREEEDLRATLLSILPQNLADKSKALMEYSSRDVAKKMITDVVMSLNA.

UDP-N-acetyl-alpha-D-glucosamine contacts are provided by residues 10-12, Asn124, Ser179, and Gln277; that span reads TGG.

It belongs to the glycosyltransferase 28 family. MurG subfamily.

It is found in the cell inner membrane. It carries out the reaction di-trans,octa-cis-undecaprenyl diphospho-N-acetyl-alpha-D-muramoyl-L-alanyl-D-glutamyl-meso-2,6-diaminopimeloyl-D-alanyl-D-alanine + UDP-N-acetyl-alpha-D-glucosamine = di-trans,octa-cis-undecaprenyl diphospho-[N-acetyl-alpha-D-glucosaminyl-(1-&gt;4)]-N-acetyl-alpha-D-muramoyl-L-alanyl-D-glutamyl-meso-2,6-diaminopimeloyl-D-alanyl-D-alanine + UDP + H(+). It functions in the pathway cell wall biogenesis; peptidoglycan biosynthesis. Functionally, cell wall formation. Catalyzes the transfer of a GlcNAc subunit on undecaprenyl-pyrophosphoryl-MurNAc-pentapeptide (lipid intermediate I) to form undecaprenyl-pyrophosphoryl-MurNAc-(pentapeptide)GlcNAc (lipid intermediate II). The chain is UDP-N-acetylglucosamine--N-acetylmuramyl-(pentapeptide) pyrophosphoryl-undecaprenol N-acetylglucosamine transferase from Sulfurimonas denitrificans (strain ATCC 33889 / DSM 1251) (Thiomicrospira denitrificans (strain ATCC 33889 / DSM 1251)).